Here is a 171-residue protein sequence, read N- to C-terminus: MNYFELFGLPIQFELDGSLLSSQFRALQKRFHPDNFATASERDRLMAVQQAAQINDAYQTLKDSLRRAEYLLSLQGIEMKAEQQTLQDPMFLMEQMELREELESVTACADPEAALVAFDTKVTAMQRHYLAQLQGQLAQSEWLAAADQIRKLKFIAKLKNEVERVEDQLLG.

The 73-residue stretch at 2 to 74 folds into the J domain; it reads NYFELFGLPI…LRRAEYLLSL (73 aa).

It belongs to the HscB family. In terms of assembly, interacts with HscA and stimulates its ATPase activity.

In terms of biological role, co-chaperone involved in the maturation of iron-sulfur cluster-containing proteins. Seems to help targeting proteins to be folded toward HscA. The polypeptide is Co-chaperone protein HscB homolog (Vibrio cholerae serotype O1 (strain M66-2)).